Here is a 675-residue protein sequence, read N- to C-terminus: UvrABC system protein B (675 aa).

Residues 32–417 (EGLSDGLAYQ…EHAGQVVEQV (386 aa)) enclose the Helicase ATP-binding domain. 45-52 (GVTGSGKT) contacts ATP. The Beta-hairpin signature appears at 98 to 121 (YYDYYQPEAYVPSRDLFIEKDSAI). The Helicase C-terminal domain occupies 436–602 (QVDDLMSEIN…QIKKQVKDII (167 aa)). In terms of domain architecture, UVR spans 634-669 (IKEIAKLEKAMQQAARDLQFEEAAVLRDRIRNIKEN).

It belongs to the UvrB family. In terms of assembly, forms a heterotetramer with UvrA during the search for lesions. Interacts with UvrC in an incision complex.

The protein resides in the cytoplasm. In terms of biological role, the UvrABC repair system catalyzes the recognition and processing of DNA lesions. A damage recognition complex composed of 2 UvrA and 2 UvrB subunits scans DNA for abnormalities. Upon binding of the UvrA(2)B(2) complex to a putative damaged site, the DNA wraps around one UvrB monomer. DNA wrap is dependent on ATP binding by UvrB and probably causes local melting of the DNA helix, facilitating insertion of UvrB beta-hairpin between the DNA strands. Then UvrB probes one DNA strand for the presence of a lesion. If a lesion is found the UvrA subunits dissociate and the UvrB-DNA preincision complex is formed. This complex is subsequently bound by UvrC and the second UvrB is released. If no lesion is found, the DNA wraps around the other UvrB subunit that will check the other stand for damage. This is UvrABC system protein B from Neisseria meningitidis serogroup A / serotype 4A (strain DSM 15465 / Z2491).